The primary structure comprises 170 residues: Translocator protein 2 (170 aa).

Helical transmembrane passes span 3–23 (LQGA…WLFT), 45–65 (VLLL…YLVW), 78–98 (LPLG…VLFF), 104–124 (GLAL…ALIW), and 130–150 (LAAL…ALTY).

This sequence belongs to the TspO/BZRP family. As to quaternary structure, homotetramer. May also form homodimer. As to expression, expressed in erythrocytes (at protein level).

It localises to the endoplasmic reticulum membrane. It is found in the cell membrane. Functionally, cholesterol-binding protein involved in the redistribution of cholesterol from lipid droplets to the endoplasmic reticulum. Required to meet cholesterol demands during erythropoietic differentiation. May play a role in transport processes at the plasma membrane of erythrocytes, including regulating VDAC-mediated ATP export, and import of the heme precursors protoporphyrin IX and 5-aminolevulinic acid. The protein is Translocator protein 2 (TSPO2) of Homo sapiens (Human).